Consider the following 424-residue polypeptide: Zinc metalloproteinase-disintegrin-like brevilysin H2a (424 aa).

Gln-1 bears the Pyrrolidone carboxylic acid mark. The Peptidase M12B domain occupies 9–207; that stretch reads RYVKLAIVAD…YKPQCILNEP (199 aa). A glycan (N-linked (GlcNAc...) asparagine) is linked at Asn-69. Residue Asp-96 coordinates Ca(2+). Intrachain disulfides connect Cys-120-Cys-202, Cys-164-Cys-186, and Cys-166-Cys-169. His-145 is a binding site for Zn(2+). Residue Glu-146 is part of the active site. 2 residues coordinate Zn(2+): His-149 and His-155. Asn-185 carries an N-linked (GlcNAc...) asparagine glycan. Residues Cys-202, Asn-205, Val-217, Asn-220, Leu-222, Glu-224, Glu-227, and Asp-230 each contribute to the Ca(2+) site. One can recognise a Disintegrin domain in the interval 215–301; sequence PPVCGNELLE…DCPTDDLQRN (87 aa). Intrachain disulfides connect Cys-218-Cys-247, Cys-229-Cys-242, Cys-231-Cys-237, Cys-241-Cys-264, Cys-255-Cys-261, Cys-260-Cys-286, Cys-273-Cys-293, Cys-280-Cys-312, Cys-305-Cys-317, Cys-324-Cys-374, Cys-339-Cys-385, Cys-352-Cys-362, Cys-369-Cys-411, and Cys-405-Cys-417. The short motif at 279 to 281 is the D/ECD-tripeptide element; it reads DCD. Positions 281, 284, and 296 each coordinate Ca(2+). Asn-331 is a glycosylation site (N-linked (GlcNAc...) asparagine).

This sequence belongs to the venom metalloproteinase (M12B) family. P-III subfamily. P-IIIa sub-subfamily. Monomer. It depends on Zn(2+) as a cofactor. Post-translationally, glycosylated. In terms of tissue distribution, expressed by the venom gland.

The protein localises to the secreted. Its proteolytic activity is inhibited by EDTA, TPEN, 1,10-phenanthroline, and some thiol compounds, but is enhanced by alkaline earth metal ions (Mg2+, Ca2+, Sr2+, and Ba2+). Its activity is not modulated by urea (4 M). Its function is as follows. Non-hemorrhagic metalloproteinase that degrades fibrinogen. The alpha chain (FGA) is rapidly degraded, the beta chain (FGB) is degraded very slowly, while the gamma chain is left intact. Shows a prefential cleavage at X-Leu bonds. Cleaves insulin B chain at '29-His-|-Leu-30', '33-Ser-|-His-34', '38-Ala-|-Leu-39' and '40-Tyr-|-Leu-41' bonds. The chain is Zinc metalloproteinase-disintegrin-like brevilysin H2a from Gloydius brevicauda (Korean slamosa snake).